Here is a 45-residue protein sequence, read N- to C-terminus: Thymosin beta-15A homolog (45 aa).

The tract at residues 19–45 (KKTNTEEKNTLPSKETIEQEKECVKSS) is disordered. Residues 21-45 (TNTEEKNTLPSKETIEQEKECVKSS) are compositionally biased toward basic and acidic residues.

It belongs to the thymosin beta family.

It localises to the cytoplasm. Its subcellular location is the cytoskeleton. Its function is as follows. Plays an important role in the organization of the cytoskeleton. Binds to and sequesters actin monomers (G actin) and therefore inhibits actin polymerization. This Coturnix japonica (Japanese quail) protein is Thymosin beta-15A homolog.